The following is a 398-amino-acid chain: Acetate kinase (398 aa).

Asn-9 provides a ligand contact to Mg(2+). Residue Lys-16 coordinates ATP. Arg-89 contributes to the substrate binding site. Asp-146 functions as the Proton donor/acceptor in the catalytic mechanism. Residues 206–210 (HLGNG), 281–283 (DCR), and 329–333 (GIGEN) each bind ATP. Glu-384 contributes to the Mg(2+) binding site.

The protein belongs to the acetokinase family. As to quaternary structure, homodimer. Requires Mg(2+) as cofactor. It depends on Mn(2+) as a cofactor.

It is found in the cytoplasm. The enzyme catalyses acetate + ATP = acetyl phosphate + ADP. Its pathway is metabolic intermediate biosynthesis; acetyl-CoA biosynthesis; acetyl-CoA from acetate: step 1/2. Catalyzes the formation of acetyl phosphate from acetate and ATP. Can also catalyze the reverse reaction. This is Acetate kinase from Vibrio campbellii (strain ATCC BAA-1116).